Consider the following 247-residue polypeptide: ATP synthase subunit a, chloroplastic (247 aa).

A run of 5 helical transmembrane segments spans residues 38-58, 95-115, 134-154, 199-219, and 220-240; these read QVLI…TVAV, VPFI…GALL, INTT…AGLT, LVVV…VMFL, and GLFT…AYIG.

Belongs to the ATPase A chain family. F-type ATPases have 2 components, CF(1) - the catalytic core - and CF(0) - the membrane proton channel. CF(1) has five subunits: alpha(3), beta(3), gamma(1), delta(1), epsilon(1). CF(0) has four main subunits: a, b, b' and c.

Its subcellular location is the plastid. It is found in the chloroplast thylakoid membrane. Its function is as follows. Key component of the proton channel; it plays a direct role in the translocation of protons across the membrane. The chain is ATP synthase subunit a, chloroplastic from Acorus calamus var. americanus (American sweet flag).